We begin with the raw amino-acid sequence, 393 residues long: UPF0496 protein At2g18630 (393 aa).

Positions 1-20 (MMGGKSSKSKKNVEFGSPST) are disordered. Positions 149–222 (VNQFEEENED…RLRNIKTWRR (74 aa)) form a coiled coil. The next 2 helical transmembrane spans lie at 226–246 (MVFV…AAVA) and 249–269 (PVVA…GKWC). A coiled-coil region spans residues 299 to 356 (KEMDNISILVRKVEVEIESLLKKAEFAITEEKEVRLAIDEIKKKLDVFTETIEELGEH).

This sequence belongs to the UPF0496 family.

It localises to the membrane. The protein is UPF0496 protein At2g18630 of Arabidopsis thaliana (Mouse-ear cress).